The following is a 149-amino-acid chain: D-aminoacyl-tRNA deacylase (149 aa).

The Gly-cisPro motif, important for rejection of L-amino acids motif lies at 137 to 138 (GP).

Belongs to the DTD family. In terms of assembly, homodimer.

The protein localises to the cytoplasm. It catalyses the reaction glycyl-tRNA(Ala) + H2O = tRNA(Ala) + glycine + H(+). The catalysed reaction is a D-aminoacyl-tRNA + H2O = a tRNA + a D-alpha-amino acid + H(+). Functionally, an aminoacyl-tRNA editing enzyme that deacylates mischarged D-aminoacyl-tRNAs. Also deacylates mischarged glycyl-tRNA(Ala), protecting cells against glycine mischarging by AlaRS. Acts via tRNA-based rather than protein-based catalysis; rejects L-amino acids rather than detecting D-amino acids in the active site. By recycling D-aminoacyl-tRNA to D-amino acids and free tRNA molecules, this enzyme counteracts the toxicity associated with the formation of D-aminoacyl-tRNA entities in vivo and helps enforce protein L-homochirality. The polypeptide is D-aminoacyl-tRNA deacylase (Thioalkalivibrio sulfidiphilus (strain HL-EbGR7)).